We begin with the raw amino-acid sequence, 210 residues long: Redox-sensing transcriptional repressor Rex (210 aa).

The segment at residues 16–55 (IYSRYLRQLIEEGVETVSSGEIAAGVGVSSAQVRKDLAYF) is a DNA-binding region (H-T-H motif). 90–95 (GAGKLG) provides a ligand contact to NAD(+).

This sequence belongs to the transcriptional regulatory Rex family. As to quaternary structure, homodimer.

It is found in the cytoplasm. Its function is as follows. Modulates transcription in response to changes in cellular NADH/NAD(+) redox state. The sequence is that of Redox-sensing transcriptional repressor Rex from Syntrophomonas wolfei subsp. wolfei (strain DSM 2245B / Goettingen).